Reading from the N-terminus, the 402-residue chain is Putative polyketide beta-ketoacyl synthase 2 (402 aa).

Disordered regions lie at residues 1 to 30 (MTPVAVTGMGIAAPNGLGRPTTGRPPWAPR) and 188 to 222 (VEPRSAPGAGSPSSPAGGMSDSDEPNRAYLPFDRD). The Ketosynthase family 3 (KS3) domain occupies 1-400 (MTPVAVTGMG…GFNSALVVRA (400 aa)). The span at 192-205 (SAPGAGSPSSPAGG) shows a compositional bias: low complexity.

The protein belongs to the thiolase-like superfamily. Beta-ketoacyl-ACP synthases family.

The protein operates within antifungal biosynthesis; monensin biosynthesis. This is Putative polyketide beta-ketoacyl synthase 2 from Streptomyces virginiae (Streptomyces cinnamonensis).